The chain runs to 696 residues: Glycine--tRNA ligase beta subunit (696 aa).

The protein belongs to the class-II aminoacyl-tRNA synthetase family. In terms of assembly, tetramer of two alpha and two beta subunits.

The protein resides in the cytoplasm. It catalyses the reaction tRNA(Gly) + glycine + ATP = glycyl-tRNA(Gly) + AMP + diphosphate. The sequence is that of Glycine--tRNA ligase beta subunit from Nitratidesulfovibrio vulgaris (strain DP4) (Desulfovibrio vulgaris).